The following is a 240-amino-acid chain: MEGLINGSVYYKIFDKTFNNSSHRYIKKNNSINETEIVENKKSITTYFKAQDILILNQVHGNQIVNADESIIAVPEADGSITTKKNLILAVQSADCVPVLLASGDGKIIGAAHAGWKGSINNIISNIVTKITEKGAKNLIAVIGPAIAQSSYEVDDEYYKAFLSKDINNKQFFIHSIKENHYMFDLPAFVELKLKEAGVKDIKNIAEDTYTNPLKYPSKRRSYHLQEPYNQNILSAIVMK.

Zn(2+) contacts are provided by histidine 60, cysteine 96, and histidine 113.

The protein belongs to the purine nucleoside phosphorylase YfiH/LACC1 family. In terms of assembly, homodimer. The cofactor is Cu(2+). Zn(2+) is required as a cofactor.

It carries out the reaction adenosine + phosphate = alpha-D-ribose 1-phosphate + adenine. The catalysed reaction is S-methyl-5'-thioadenosine + phosphate = 5-(methylsulfanyl)-alpha-D-ribose 1-phosphate + adenine. It catalyses the reaction inosine + phosphate = alpha-D-ribose 1-phosphate + hypoxanthine. The enzyme catalyses adenosine + H2O + H(+) = inosine + NH4(+). In terms of biological role, purine nucleoside enzyme that catalyzes the phosphorolysis of adenosine and inosine nucleosides, yielding D-ribose 1-phosphate and the respective free bases, adenine and hypoxanthine. Also catalyzes the phosphorolysis of S-methyl-5'-thioadenosine into adenine and S-methyl-5-thio-alpha-D-ribose 1-phosphate. Also has adenosine deaminase activity. This chain is Purine nucleoside phosphorylase RC0672, found in Rickettsia conorii (strain ATCC VR-613 / Malish 7).